Consider the following 634-residue polypeptide: RING finger protein 207 (634 aa).

An RING-type zinc finger spans residues 25-63 (CHLCQEQYEHPCLLDCYHTFCASCLRGRVADSRLTCPVC). The segment at 93 to 145 (EETVQCANCDLECKKQDVDAMYYCNTCCQPLCRDCRETTHKAKMFSRHEIVSL) adopts a B box-type; atypical zinc-finger fold. Positions 98, 101, 127, and 132 each coordinate Zn(2+). The disordered stretch occupies residues 575–634 (YEDSTSTADTQPSNELSCNTEDNWTLNSLSEETNPKNKDYYRTNKQKNTTDSTNRKEIPM). A compositionally biased stretch (polar residues) spans 577–606 (DSTSTADTQPSNELSCNTEDNWTLNSLSEE). Basic and acidic residues predominate over residues 607-616 (TNPKNKDYYR).

It localises to the cytoplasm. Functionally, plays a role in cardiac repolarization possibly by stabilizing membrane expression of the potassium channel kcnh6a/zerg, or by assisting its synthesis, folding or export from the endoplasmic reticulum, in a heat shock protein-dependent manner. The chain is RING finger protein 207 (rnf207b) from Danio rerio (Zebrafish).